We begin with the raw amino-acid sequence, 277 residues long: S-formylglutathione hydrolase FrmB (277 aa).

Catalysis depends on charge relay system residues S145, D221, and H254.

Belongs to the esterase D family.

It carries out the reaction S-formylglutathione + H2O = formate + glutathione + H(+). In terms of biological role, serine hydrolase involved in the detoxification of formaldehyde. Hydrolyzes S-formylglutathione to glutathione and formate. This Escherichia coli O6:K15:H31 (strain 536 / UPEC) protein is S-formylglutathione hydrolase FrmB (frmB).